A 321-amino-acid polypeptide reads, in one-letter code: Leucine-rich repeat-containing protein 46 (321 aa).

4 LRR repeats span residues 45–66 (ELQT…EGLQ), 67–88 (NLHS…ACIP), 89–110 (SLRF…LDLP), and 111–132 (CLQF…EFPQ). The LRRCT domain occupies 142–184 (NSCTNQDGYRELVTEALPLLLDLDGQPVVERWISDEEDEASSD). Residues serine 175 and serine 182 each carry the phosphoserine modification. A coiled-coil region spans residues 201–221 (LKELEQELSRHREHRQQTALT). Residues 235-321 (DLPLLPGVPM…TKTTAKRSKK (87 aa)) are disordered.

It is found in the cell projection. Its subcellular location is the cilium. The protein resides in the flagellum. Required for normal spermatogenesis and male fertility. Plays an important role in sperm flagellum biogenesis. The protein is Leucine-rich repeat-containing protein 46 (LRRC46) of Homo sapiens (Human).